We begin with the raw amino-acid sequence, 842 residues long: Glucans biosynthesis glucosyltransferase H (842 aa).

Helical transmembrane passes span 140-160 (ILLL…KTIL), 194-214 (ILIL…TALM), 513-533 (VFLT…FLAL), 568-588 (IALF…SIIL), 615-635 (VLLA…AFLG), 656-676 (FMRH…MAWL), and 680-700 (FLFW…VSAI).

Belongs to the glycosyltransferase 2 family. OpgH subfamily.

It is found in the cell inner membrane. It participates in glycan metabolism; osmoregulated periplasmic glucan (OPG) biosynthesis. Functionally, involved in the biosynthesis of osmoregulated periplasmic glucans (OPGs). The sequence is that of Glucans biosynthesis glucosyltransferase H from Klebsiella pneumoniae subsp. pneumoniae (strain ATCC 700721 / MGH 78578).